The primary structure comprises 238 residues: Uridylate kinase (238 aa).

ATP is bound at residue 12-15 (KLSG). Gly54 serves as a coordination point for UMP. 2 residues coordinate ATP: Gly55 and Arg59. UMP is bound by residues Asp74 and 135 to 142 (TGNPFFTT). Positions 162, 163, 168, and 171 each coordinate ATP.

Belongs to the UMP kinase family. Homohexamer.

The protein resides in the cytoplasm. The catalysed reaction is UMP + ATP = UDP + ADP. Its pathway is pyrimidine metabolism; CTP biosynthesis via de novo pathway; UDP from UMP (UMPK route): step 1/1. Inhibited by UTP. Catalyzes the reversible phosphorylation of UMP to UDP. The sequence is that of Uridylate kinase from Rhodopseudomonas palustris (strain BisB18).